The following is a 245-amino-acid chain: Actin-like protein 10 (245 aa).

This sequence belongs to the actin family.

In Homo sapiens (Human), this protein is Actin-like protein 10 (ACTL10).